The chain runs to 210 residues: Ribosomal RNA small subunit methyltransferase G (210 aa).

Residues Gly-77, Phe-82, 100–102, 128–129, and Arg-141 each bind S-adenosyl-L-methionine; these read ERS and VE.

This sequence belongs to the methyltransferase superfamily. RNA methyltransferase RsmG family.

The protein localises to the cytoplasm. In terms of biological role, specifically methylates the N7 position of a guanine in 16S rRNA. This Borrelia recurrentis (strain A1) protein is Ribosomal RNA small subunit methyltransferase G.